We begin with the raw amino-acid sequence, 285 residues long: Bifunctional protein FolD (285 aa).

NADP(+)-binding positions include 165-167 (GRS) and S190.

This sequence belongs to the tetrahydrofolate dehydrogenase/cyclohydrolase family. As to quaternary structure, homodimer.

It carries out the reaction (6R)-5,10-methylene-5,6,7,8-tetrahydrofolate + NADP(+) = (6R)-5,10-methenyltetrahydrofolate + NADPH. The enzyme catalyses (6R)-5,10-methenyltetrahydrofolate + H2O = (6R)-10-formyltetrahydrofolate + H(+). The protein operates within one-carbon metabolism; tetrahydrofolate interconversion. In terms of biological role, catalyzes the oxidation of 5,10-methylenetetrahydrofolate to 5,10-methenyltetrahydrofolate and then the hydrolysis of 5,10-methenyltetrahydrofolate to 10-formyltetrahydrofolate. The chain is Bifunctional protein FolD from Streptococcus pneumoniae (strain ATCC BAA-255 / R6).